The chain runs to 224 residues: MSGDASTSAQDQNVESNDVPAIPDVDAGTPIDPVVEETPTLDTEIDPANRLQQLEQELNSLKQEHEAVQSQYMRIAADFDNFRKRQARDQDDLRQQLVCSTLTEILPVVDNFERARQQLNPEGEEAQALHRSYQGLYKQLVDVLKQQGVARMEVVGQEFDPTLHEAVLREENQEHAEDIVCEELQRGYHRDGRVLRHAMVKVSMGPGPESSSDAASEQPQEGDA.

Polar residues-rich tracts occupy residues Met1–Ser16 and Glu209–Ala224. Disordered regions lie at residues Met1–Val35 and Ser203–Ala224.

It belongs to the GrpE family. Homodimer.

The protein resides in the cytoplasm. Its function is as follows. Participates actively in the response to hyperosmotic and heat shock by preventing the aggregation of stress-denatured proteins, in association with DnaK and GrpE. It is the nucleotide exchange factor for DnaK and may function as a thermosensor. Unfolded proteins bind initially to DnaJ; upon interaction with the DnaJ-bound protein, DnaK hydrolyzes its bound ATP, resulting in the formation of a stable complex. GrpE releases ADP from DnaK; ATP binding to DnaK triggers the release of the substrate protein, thus completing the reaction cycle. Several rounds of ATP-dependent interactions between DnaJ, DnaK and GrpE are required for fully efficient folding. The protein is Protein GrpE of Synechococcus sp. (strain CC9902).